Reading from the N-terminus, the 1061-residue chain is RecBCD enzyme subunit RecC (1061 aa).

Belongs to the RecC family. Heterotrimer of RecB, RecC and RecD. All subunits contribute to DNA-binding.

A helicase/nuclease that prepares dsDNA breaks (DSB) for recombinational DNA repair. Binds to DSBs and unwinds DNA via a highly rapid and processive ATP-dependent bidirectional helicase activity. Unwinds dsDNA until it encounters a Chi (crossover hotspot instigator) sequence from the 3' direction. Cuts ssDNA a few nucleotides 3' to the Chi site. The properties and activities of the enzyme are changed at Chi. The Chi-altered holoenzyme produces a long 3'-ssDNA overhang and facilitates RecA-binding to the ssDNA for homologous DNA recombination and repair. Holoenzyme degrades any linearized DNA that is unable to undergo homologous recombination. In the holoenzyme this subunit recognizes the wild-type Chi sequence, and when added to isolated RecB increases its ATP-dependent helicase processivity. This Buchnera aphidicola subsp. Schizaphis graminum (strain Sg) protein is RecBCD enzyme subunit RecC.